The following is a 135-amino-acid chain: Large ribosomal subunit protein eL27z (135 aa).

Belongs to the eukaryotic ribosomal protein eL27 family.

The protein is Large ribosomal subunit protein eL27z (RPL27A) of Arabidopsis thaliana (Mouse-ear cress).